The primary structure comprises 163 residues: DNA endonuclease I-CreI (163 aa).

2 residues coordinate Mg(2+): Gly19 and Asp20. Interaction with DNA regions lie at residues 26-38 (QIKP…FKHQ), 44-47 (QVTQ), 68-70 (RDR), and 138-143 (SKTRKT).

Belongs to the LAGLIDADG endonuclease family. Homodimer. The cofactor is Mg(2+). Requires Mn(2+) as cofactor. Co(2+) is required as a cofactor. It depends on Ni(2+) as a cofactor. Zn(2+) serves as cofactor.

The protein resides in the plastid. It localises to the chloroplast. Functionally, endonuclease involved in group I intron homing. Recognizes and cleaves a 19-24 bp palindromic DNA site. The polypeptide is DNA endonuclease I-CreI (Chlamydomonas reinhardtii (Chlamydomonas smithii)).